The chain runs to 105 residues: Large ribosomal subunit protein bL21 (105 aa).

Belongs to the bacterial ribosomal protein bL21 family. In terms of assembly, part of the 50S ribosomal subunit. Contacts protein L20.

This protein binds to 23S rRNA in the presence of protein L20. This chain is Large ribosomal subunit protein bL21, found in Methylobacterium sp. (strain 4-46).